The chain runs to 275 residues: Membrane protein insertase YidC 1 (275 aa).

Positions Met-1 to Ala-25 are cleaved as a signal peptide. Residue Cys-26 is the site of N-palmitoyl cysteine attachment. Cys-26 carries S-diacylglycerol cysteine lipidation. The next 5 membrane-spanning stretches (helical) occupy residues Ser-58–Phe-78, Tyr-129–Leu-149, Leu-171–Leu-191, Val-198–Phe-216, and Val-222–Leu-240.

It belongs to the OXA1/ALB3/YidC family. Type 2 subfamily.

It is found in the cell membrane. Required for the insertion and/or proper folding and/or complex formation of integral membrane proteins into the membrane. Involved in integration of membrane proteins that insert both dependently and independently of the Sec translocase complex, as well as at least some lipoproteins. The polypeptide is Membrane protein insertase YidC 1 (Streptococcus pyogenes serotype M1).